Here is a 962-residue protein sequence, read N- to C-terminus: Atromentin synthetase nps3 (962 aa).

Positions 55-469 are adenylation (A) domain; the sequence is FISSSAHDSS…SGRIKDTVIV (415 aa). Residues 601–679 enclose the Carrier domain; the sequence is VPATITETAF…DLAKYIDALV (79 aa). A thiolation and peptide carrier (T) domain region spans residues 606-676; the sequence is TETAFAKIFA…VLRDLAKYID (71 aa). An O-(pantetheine 4'-phosphoryl)serine modification is found at Ser-638. Positions 702–805 are thioesterase (TE) domain; the sequence is PIFFVHPGVG…VGLINIPPHI (104 aa).

Belongs to the ATP-dependent AMP-binding enzyme family.

Its pathway is secondary metabolite biosynthesis. In terms of biological role, an L-tyrosine:2-oxoglutarate aminotransferase (probably amt1) and atromentin synthetase nps3 catalyze consecutive steps to turn over L-tyrosine into atromentin, which represents the generic precursor molecule for the entire terphenylquinone and pulvinic acid family of pigments, which are widely distributed secondary metabolites in homobasidiomycetes. The first step catalyzed by the aminotransferase converts L-tyrosine in to 4-hydroxyphenylpyruvate (4-HPP). Adenylation of two 4-HPP monomers by the nps3 adenylation (A) domain, covalent tethering of the monomers as a thioester and oxoester onto the nps3 thiolation (T) and thioesterase (TE) domains, respectively, and symmetric C-C-bond formation between two monomers catalyzed by the nps3 TE domain leads to atromentin. Follow-up products of atromentin in S.lacrymans include atromentic acid, xerocomic acid, isoxerocomic acid and variegatic acid. In Serpula lacrymans var. lacrymans (strain S7.9) (Dry rot fungus), this protein is Atromentin synthetase nps3 (nps3).